We begin with the raw amino-acid sequence, 222 residues long: Ribosomal RNA small subunit methyltransferase G (222 aa).

S-adenosyl-L-methionine-binding positions include glycine 80, leucine 85, 131 to 132 (VE), and arginine 148.

It belongs to the methyltransferase superfamily. RNA methyltransferase RsmG family.

It localises to the cytoplasm. It catalyses the reaction guanosine(527) in 16S rRNA + S-adenosyl-L-methionine = N(7)-methylguanosine(527) in 16S rRNA + S-adenosyl-L-homocysteine. Its function is as follows. Specifically methylates the N7 position of guanine in position 527 of 16S rRNA. The sequence is that of Ribosomal RNA small subunit methyltransferase G from Polynucleobacter asymbioticus (strain DSM 18221 / CIP 109841 / QLW-P1DMWA-1) (Polynucleobacter necessarius subsp. asymbioticus).